A 306-amino-acid chain; its full sequence is Elongation factor Ts (306 aa).

Residues 79-82 are involved in Mg(2+) ion dislocation from EF-Tu; that stretch reads TDFV.

This sequence belongs to the EF-Ts family.

It is found in the cytoplasm. Associates with the EF-Tu.GDP complex and induces the exchange of GDP to GTP. It remains bound to the aminoacyl-tRNA.EF-Tu.GTP complex up to the GTP hydrolysis stage on the ribosome. This is Elongation factor Ts from Mesorhizobium japonicum (strain LMG 29417 / CECT 9101 / MAFF 303099) (Mesorhizobium loti (strain MAFF 303099)).